A 427-amino-acid chain; its full sequence is A-adding tRNA nucleotidyltransferase (427 aa).

49–52 contributes to the ATP binding site; sequence GTVR. Positions 62 and 64 each coordinate Mg(2+). ATP contacts are provided by residues 136 to 137, Asn-141, 181 to 190, Arg-194, and Arg-225; these read RD and DPTRLLRGVR.

Belongs to the tRNA nucleotidyltransferase/poly(A) polymerase family. Requires Mg(2+) as cofactor.

It carries out the reaction a tRNA with a 3' CC end + ATP = a tRNA with a 3' CCA end + diphosphate. In terms of biological role, tRNA nucleotidyltransferase involved in the synthesis of the tRNA CCA terminus. Adds the terminal adenosine residue to tRNA. The sequence is that of A-adding tRNA nucleotidyltransferase from Halalkalibacterium halodurans (strain ATCC BAA-125 / DSM 18197 / FERM 7344 / JCM 9153 / C-125) (Bacillus halodurans).